A 205-amino-acid polypeptide reads, in one-letter code: Holliday junction branch migration complex subunit RuvA (205 aa).

The domain I stretch occupies residues 1–64 (MIGRLSGILV…EDAQLLYGFI (64 aa)). Positions 65 to 143 (TKQERALFRL…SLLEASAGSE (79 aa)) are domain II. The flexible linker stretch occupies residues 144–156 (REFMLQSNYTPAA). Positions 157–205 (AVDSAEEDAISALLSLGYKPAQASKSVSAAFKEGMSSETLIKAALKSML) are domain III.

The protein belongs to the RuvA family. Homotetramer. Forms an RuvA(8)-RuvB(12)-Holliday junction (HJ) complex. HJ DNA is sandwiched between 2 RuvA tetramers; dsDNA enters through RuvA and exits via RuvB. An RuvB hexamer assembles on each DNA strand where it exits the tetramer. Each RuvB hexamer is contacted by two RuvA subunits (via domain III) on 2 adjacent RuvB subunits; this complex drives branch migration. In the full resolvosome a probable DNA-RuvA(4)-RuvB(12)-RuvC(2) complex forms which resolves the HJ.

It is found in the cytoplasm. The RuvA-RuvB-RuvC complex processes Holliday junction (HJ) DNA during genetic recombination and DNA repair, while the RuvA-RuvB complex plays an important role in the rescue of blocked DNA replication forks via replication fork reversal (RFR). RuvA specifically binds to HJ cruciform DNA, conferring on it an open structure. The RuvB hexamer acts as an ATP-dependent pump, pulling dsDNA into and through the RuvAB complex. HJ branch migration allows RuvC to scan DNA until it finds its consensus sequence, where it cleaves and resolves the cruciform DNA. The polypeptide is Holliday junction branch migration complex subunit RuvA (Shewanella frigidimarina (strain NCIMB 400)).